A 464-amino-acid chain; its full sequence is Asparagine--tRNA ligase (464 aa).

It belongs to the class-II aminoacyl-tRNA synthetase family. Homodimer.

It localises to the cytoplasm. It catalyses the reaction tRNA(Asn) + L-asparagine + ATP = L-asparaginyl-tRNA(Asn) + AMP + diphosphate + H(+). The sequence is that of Asparagine--tRNA ligase from Clostridium beijerinckii (strain ATCC 51743 / NCIMB 8052) (Clostridium acetobutylicum).